The chain runs to 371 residues: D-alanine--D-alanine ligase (371 aa).

Positions 154–361 constitute an ATP-grasp domain; sequence KKLLVAEGLP…YPTLLAAMVD (208 aa). An ATP-binding site is contributed by 182 to 237; the sequence is RERLGLPVFVKPARGGSSIGVSRVSDWAELPAAIEAARRHDPKVIVEAGIAGRELE. 3 residues coordinate Mg(2+): D316, E328, and N330.

This sequence belongs to the D-alanine--D-alanine ligase family. Mg(2+) serves as cofactor. The cofactor is Mn(2+).

It is found in the cytoplasm. The catalysed reaction is 2 D-alanine + ATP = D-alanyl-D-alanine + ADP + phosphate + H(+). It functions in the pathway cell wall biogenesis; peptidoglycan biosynthesis. Cell wall formation. In Mycobacterium sp. (strain JLS), this protein is D-alanine--D-alanine ligase.